The primary structure comprises 500 residues: Glycerol kinase (500 aa).

ADP is bound at residue Thr-12. Positions 12, 13, and 14 each coordinate ATP. A sn-glycerol 3-phosphate-binding site is contributed by Thr-12. Arg-16 contributes to the ADP binding site. 4 residues coordinate sn-glycerol 3-phosphate: Arg-82, Glu-83, Tyr-134, and Asp-244. 5 residues coordinate glycerol: Arg-82, Glu-83, Tyr-134, Asp-244, and Gln-245. Residues Thr-266 and Gly-309 each coordinate ADP. Residues Thr-266, Gly-309, Gln-313, and Gly-410 each coordinate ATP. Residues Gly-410 and Asn-414 each coordinate ADP.

The protein belongs to the FGGY kinase family. As to quaternary structure, homotetramer and homodimer (in equilibrium).

The enzyme catalyses glycerol + ATP = sn-glycerol 3-phosphate + ADP + H(+). It participates in polyol metabolism; glycerol degradation via glycerol kinase pathway; sn-glycerol 3-phosphate from glycerol: step 1/1. Its activity is regulated as follows. Activated by phosphorylation and inhibited by fructose 1,6-bisphosphate (FBP). Its function is as follows. Key enzyme in the regulation of glycerol uptake and metabolism. Catalyzes the phosphorylation of glycerol to yield sn-glycerol 3-phosphate. The sequence is that of Glycerol kinase from Alkaliphilus metalliredigens (strain QYMF).